The primary structure comprises 714 residues: Fumarate reductase flavoprotein subunit (714 aa).

FAD is bound by residues 13–16, 42–44, and 49–50; these read GGLA, SHS, and GG. Residue His-43 is modified to Tele-8alpha-FAD histidine. Residues His-257 and Arg-273 contribute to the active site. FAD is bound by residues Glu-420 and 436–437; that span reads SV.

Belongs to the FAD-dependent oxidoreductase 2 family. FRD/SDH subfamily. In terms of assembly, part of an enzyme complex containing three subunits: a flavoprotein (frdA), an iron-sulfur protein (frdB), and diheme cytochrome b (frdC). The cofactor is FAD.

The protein localises to the cell inner membrane. It catalyses the reaction a quinone + succinate = fumarate + a quinol. In terms of biological role, the fumarate reductase enzyme complex is required for fumarate respiration. The protein is Fumarate reductase flavoprotein subunit (frdA) of Helicobacter pylori (strain ATCC 700392 / 26695) (Campylobacter pylori).